Reading from the N-terminus, the 535-residue chain is GMP synthase [glutamine-hydrolyzing] (535 aa).

In terms of domain architecture, Glutamine amidotransferase type-1 spans 24–217; it reads KILIVDFGSQ…VRKVAGLTGD (194 aa). The active-site Nucleophile is C101. Residues H191 and E193 contribute to the active site. Residues 218 to 410 enclose the GMPS ATP-PPase domain; that stretch reads WTMRAFREEA…LGLPEIFVGR (193 aa). An ATP-binding site is contributed by 245-251; that stretch reads SGGVDSS.

As to quaternary structure, homodimer.

The enzyme catalyses XMP + L-glutamine + ATP + H2O = GMP + L-glutamate + AMP + diphosphate + 2 H(+). It participates in purine metabolism; GMP biosynthesis; GMP from XMP (L-Gln route): step 1/1. Catalyzes the synthesis of GMP from XMP. The sequence is that of GMP synthase [glutamine-hydrolyzing] from Nitrobacter winogradskyi (strain ATCC 25391 / DSM 10237 / CIP 104748 / NCIMB 11846 / Nb-255).